A 393-amino-acid chain; its full sequence is SH3 domain-binding protein 5-like (393 aa).

A disordered region spans residues 1-58 (MAELRQVPGGRETPQGELRPEVVEDEVPRSPVAEEPGGGGSSSSEAKLSPREEEELDP). Thr13 is subject to Phosphothreonine. Basic and acidic residues predominate over residues 18-28 (LRPEVVEDEVP). 2 positions are modified to phosphoserine: Ser30 and Ser49. Coiled-coil stretches lie at residues 59-140 (RIQE…YERA) and 169-272 (WQEM…EQIH). Positions 273 to 332 (ARRRGGLPPHPLGPRRSSPVGAEAGPEDMEDGDSGIEGAEGAGLEEGSSLGPGPAPDTDT) are disordered. The segment covering 297 to 306 (GPEDMEDGDS) has biased composition (acidic residues). The segment covering 317-332 (EEGSSLGPGPAPDTDT) has biased composition (low complexity). Phosphoserine occurs at positions 343, 350, 358, 362, and 378. The interval 362–393 (SLDGQELGTRSGGRRGSDGGARGGRHQRSVSL) is disordered. Residues 384-393 (GGRHQRSVSL) are compositionally biased toward basic residues.

It belongs to the SH3BP5 family.

Functionally, functions as a guanine nucleotide exchange factor (GEF) for RAB11A. The sequence is that of SH3 domain-binding protein 5-like (SH3BP5L) from Homo sapiens (Human).